The chain runs to 156 residues: Longistatin (156 aa).

The N-terminal stretch at 1-21 (MTHRRLLWALCVAALLGVVAA) is a signal peptide. EF-hand domains lie at 70 to 105 (SQDE…TNHH) and 123 to 156 (DIAS…TNQI). 10 residues coordinate Ca(2+): D83, D85, N87, K89, E94, D135, N137, D139, F141, and E146.

In terms of assembly, interacts with host fibrin. Interacts with human RAGE/AGER. As to expression, saliva (at protein level). Salivary gland (at protein level). Not detected in midgut, ovary, trachea, Malpighian tubule system, synganglion and cuticle.

The protein resides in the secreted. Its subcellular location is the cytoplasm. With respect to regulation, resistant to inhibition by host SERPINE1. Inhibited by PMSF, aprotinin, antipain and leupeptin. Inhibited by Zn(2+). Anticoagulant and fibrinolytic protease that modulates blood feeding of ticks on vertebrate hosts. Degrades host fibrinogen and delays fibrin clot formation. Promotes lysis of fibrin clots in the host by activating host plasminogen in the presence of soluble fibrin. Binds Ca(2+). Hydrolyzes serine protease-specific substrates. Required for the formation of a blood pool, an accumulation of blood and tissue fluid developed at the tick's feeding site. Blocks activation of host AGER/RAGE. Reduces AGER/RAGE-dependent production of reactive oxygen species (ROS) in human endothelial cells. Prevents AGER/RAGE-dependent activation of NF-kappa-B and suppresses expression of adhesion molecules, such as VCAM1, ICAM1 and SELE, and secretion of cytokines, such as CSF3/GCSF and TGF-beta, in human endothelial cells. Suppresses RAGE/AGER-mediated migration of mouse peritoneal resident cells. Reduces AGER/RAGE-mediated inflammation in mice tissues. In Haemaphysalis longicornis (Bush tick), this protein is Longistatin.